We begin with the raw amino-acid sequence, 289 residues long: MERPQPDSSMPQDLSEALKEATKEVHTQAENAEFMKNFQKGELTQEGFKLVMASLYHIYVALEEEIERNKENPVYTPLYFPEELHRRASLEQDMAFWYGPRWQEAIPYTQATKRYVQRLQEVGRTEPELLVAHAYTRYLGDLSGGQVLKKIAQKALNLPSSGEGLAFFTFPNIASATKFKQLYRSRMNTLEMTPEVRQRVLDEAKTAFLLNIQLFEELQGLLTQKAKDHDPLQAPELHRRAGSKVQDLAPTKASRGKPQPSVLSQAPLLRWVLTLSFLVATVAVGLYAM.

Residues M1–Q12 show a composition bias toward polar residues. Residues M1–E24 form a disordered region. Over M1–A266 the chain is Cytoplasmic. 4 residues coordinate heme b: K19, H26, Y135, and R184. The segment at R239–S261 is disordered. S243 carries the post-translational modification Phosphoserine. The chain crosses the membrane as a helical; Anchor for type IV membrane protein span at residues P267–M289.

The protein belongs to the heme oxygenase family. Homodimer and higher order homooligomer. Oligomerization is crucial for its stability and function in the endoplasmic reticulum. Interacts with FLVCR2; this interaction is potentiated in the presence of heme. A soluble form arises by proteolytic removal of the membrane anchor.

Its subcellular location is the endoplasmic reticulum membrane. It catalyses the reaction heme b + 3 reduced [NADPH--hemoprotein reductase] + 3 O2 = biliverdin IXalpha + CO + Fe(2+) + 3 oxidized [NADPH--hemoprotein reductase] + 3 H2O + H(+). With respect to regulation, inhibited by metalloporphyrins such as Sn-, Co-, Mn- and Zn-protoporphyrins. In terms of biological role, catalyzes the oxidative cleavage of heme at the alpha-methene bridge carbon, released as carbon monoxide (CO), to generate biliverdin IXalpha, while releasing the central heme iron chelate as ferrous iron. Affords protection against programmed cell death and this cytoprotective effect relies on its ability to catabolize free heme and prevent it from sensitizing cells to undergo apoptosis. Functionally, catalyzes the oxidative cleavage of heme at the alpha-methene bridge carbon, released as carbon monoxide (CO), to generate biliverdin IXalpha, while releasing the central heme iron chelate as ferrous iron. This Bos taurus (Bovine) protein is Heme oxygenase 1 (HMOX1).